The primary structure comprises 202 residues: Coiled-coil domain-containing protein 85B (202 aa).

N-acetylmethionine is present on Met1. Coiled-coil stretches lie at residues 43 to 90 (GRLM…ERQR) and 118 to 147 (QKLA…LGEE). A disordered region spans residues 148–202 (WGPRGGPSGAGGSGAGPAPELALPPCGPRDLGDGSSSTGSVGSPDQLPLACSPDD). Over residues 150 to 162 (PRGGPSGAGGSGA) the composition is skewed to gly residues. The span at 180 to 190 (DGSSSTGSVGS) shows a compositional bias: low complexity.

The protein belongs to the CCDC85 family. Interacts with CEBPB. Interacts with EURL. May interact with CEBPD. Interacts with MCRS1. Interacts with TCF7L2; competes with CTNNB1. Interacts with ANKRD26. Interacts with the beta-catenin family proteins ARVCF, CTNND1, CTNND2 and PKP4. In terms of assembly, (Microbial infection) Interacts with the viral phosphoprotein hepatitis delta antigen (HDAG); this interaction affects hepatitis delta virus (HDV) genomic replication in intact cells. In terms of tissue distribution, widely expressed including liver.

It localises to the nucleus. The protein resides in the cytoplasm. The protein localises to the cytoskeleton. Its subcellular location is the microtubule organizing center. It is found in the centrosome. It localises to the cell junction. The protein resides in the adherens junction. In terms of biological role, functions as a transcriptional repressor. May inhibit the activity of CTNNB1 in a TP53-dependent manner and thus regulate cell growth. May function in adipocyte differentiation, negatively regulating mitotic clonal expansion. Plays a role in cell-cell adhesion and epithelium development through its interaction with proteins of the beta-catenin family. Functionally, (Microbial infection) Plays a role in hepatitis delta virus (HDV) genomic replication. The polypeptide is Coiled-coil domain-containing protein 85B (CCDC85B) (Homo sapiens (Human)).